A 523-amino-acid polypeptide reads, in one-letter code: 2-isopropylmalate synthase (523 aa).

A Pyruvate carboxyltransferase domain is found at 5–267; that stretch reads VIIFDTTLRD…HTAINHQEIW (263 aa). Residues Asp-14, His-202, His-204, and Asn-238 each contribute to the Mn(2+) site. Residues 392–523 form a regulatory domain region; the sequence is RLDYFSVQSG…QHNENNKETV (132 aa).

Belongs to the alpha-IPM synthase/homocitrate synthase family. LeuA type 1 subfamily. In terms of assembly, homodimer. Mn(2+) serves as cofactor.

The protein resides in the cytoplasm. It carries out the reaction 3-methyl-2-oxobutanoate + acetyl-CoA + H2O = (2S)-2-isopropylmalate + CoA + H(+). Its pathway is amino-acid biosynthesis; L-leucine biosynthesis; L-leucine from 3-methyl-2-oxobutanoate: step 1/4. Functionally, catalyzes the condensation of the acetyl group of acetyl-CoA with 3-methyl-2-oxobutanoate (2-ketoisovalerate) to form 3-carboxy-3-hydroxy-4-methylpentanoate (2-isopropylmalate). This Escherichia coli O81 (strain ED1a) protein is 2-isopropylmalate synthase.